The following is a 681-amino-acid chain: Fibulin-1 (681 aa).

The N-terminal stretch at 1-17 (MDLYMIVLLSLCGLLRA) is a signal peptide. Cystine bridges form between cysteine 29–cysteine 55, cysteine 30–cysteine 62, cysteine 43–cysteine 63, cysteine 72–cysteine 103, cysteine 85–cysteine 104, cysteine 106–cysteine 125, cysteine 107–cysteine 138, cysteine 114–cysteine 139, cysteine 162–cysteine 171, cysteine 167–cysteine 176, cysteine 178–cysteine 191, cysteine 197–cysteine 210, cysteine 204–cysteine 219, cysteine 225–cysteine 237, cysteine 243–cysteine 256, cysteine 250–cysteine 265, cysteine 271–cysteine 283, cysteine 289–cysteine 301, cysteine 317–cysteine 330, cysteine 336–cysteine 348, cysteine 343–cysteine 357, cysteine 359–cysteine 372, cysteine 378–cysteine 390, cysteine 386–cysteine 399, cysteine 401–cysteine 414, cysteine 420–cysteine 429, cysteine 440–cysteine 454, cysteine 460–cysteine 473, cysteine 469–cysteine 482, cysteine 484–cysteine 498, cysteine 504–cysteine 517, cysteine 511–cysteine 526, and cysteine 531–cysteine 553. Anaphylatoxin-like domains lie at 29 to 63 (CCEDGKKRGLESQDCSSLPLISESTTCRVVQEQCC), 68 to 107 (EDSICTSGINMAKDQSSCDALLSGSSTCETKTTKMCCECC), and 108 to 139 (LLGSSRCRIRVSPVSSVCRWSISRGPGVRSCC). Positions 158–192 (TEDQCRAAGCAQRCLNGTCSCLDGFKLKTDGKHCE) constitute an EGF-like 1 domain. N-linked (GlcNAc...) asparagine glycosylation is present at asparagine 173. The EGF-like 2; calcium-binding domain occupies 193–238 (DINECLLGPHHCVTGERCINTLGSYRCQREISCGTGYELTDNNKCK). The EGF-like 3; calcium-binding domain occupies 239–284 (DIDECDLGTHNCAAEMECQNTAGSFRCRPRMQCAAGFIQDALGSCI). Positions 285 to 331 (DINECVSVTALSRGQMCFNTVGSFICQRHSVTCGRGYHLNAEGTRCV) constitute an EGF-like 4; calcium-binding domain. Residues 332 to 373 (DIDECAGPDNSCDGHGCINLVGSYRCECRTGFIFNSISRSCE) form the EGF-like 5; calcium-binding domain. Residues 374-415 (DIDECRNYPGRLCAHKCENILGSYKCSCTAGFKLADDGRNCD) form the EGF-like 6; calcium-binding domain. The EGF-like 7; calcium-binding domain occupies 416-455 (DVNECESSPCSQGCANVYGSYQSYCRRGYQLSDADGITCE). One can recognise an EGF-like 8; calcium-binding domain in the interval 456–499 (DIDECALPTGGHICSYRCHNTPGSFHCTCPASGYTLAANGRSCQ). Residues 500–554 (DIDECLTGTHSCSESESCFNIQGGFRCLSFDCPANYRRSGDTRPRVDRADIIRCV) enclose the EGF-like 9; calcium-binding domain.

Belongs to the fibulin family. In terms of assembly, homomultimerizes and interacts with various extracellular matrix components such as FN1, LAMA1, NID, AGC1 and CSPG2.

It is found in the secreted. The protein resides in the extracellular space. It localises to the extracellular matrix. Functionally, incorporated into fibronectin-containing matrix fibers. May play a role in cell adhesion and migration along protein fibers within the extracellular matrix (ECM). Could be important for certain developmental processes and contribute to the supramolecular organization of ECM architecture, in particular to those of basement membranes. The chain is Fibulin-1 (fbln1) from Danio rerio (Zebrafish).